The following is a 269-amino-acid chain: Putative ankyrin repeat protein L23 (269 aa).

5 ANK repeats span residues 118–147, 148–177, 179–207, 208–237, and 238–267; these read EDDY…DIKS, DGDY…DIRA, NDYA…NIRE, QNDY…DIRA, and DNDC…DIRA.

This chain is Putative ankyrin repeat protein L23, found in Acanthamoeba polyphaga (Amoeba).